The sequence spans 410 residues: Thyroid hormone receptor alpha (410 aa).

The segment at Met1–Gln32 is disordered. Residues Met1–Gln52 are modulating. Cys53, Cys56, Cys70, Cys73, Cys91, Cys97, Cys107, and Cys110 together coordinate Zn(2+). NR C4-type zinc fingers lie at residues Cys53–Cys73 and Cys91–Cys115. A DNA-binding region (nuclear receptor) is located at residues Cys53–Asp127. In terms of domain architecture, NR LBD spans Glu163–Asp407. 2 residues coordinate 3,3',5-triiodo-L-thyronine: Arg228 and Ser277.

The protein belongs to the nuclear hormone receptor family. NR1 subfamily. In terms of assembly, binds DNA as a dimer; homodimer and heterodimer with RXRB. Interacts with NCOA3 and NCOA6 coactivators, leading to a strong increase of transcription of target genes. Probably interacts with SFPQ. Interacts with C1D. Interacts with AKAP13. Interacts with TP53INP2. Interacts with PER2. Interacts with TACC1. The interaction with isoform alpha-1, but not alpha-2, is decreased in the presence of thyroid hormone T3.

The protein resides in the nucleus. Its subcellular location is the cytoplasm. Nuclear hormone receptor that can act as a repressor or activator of transcription. High affinity receptor for thyroid hormones, including triiodothyronine and thyroxine. This chain is Thyroid hormone receptor alpha (THRA), found in Ovis aries (Sheep).